Consider the following 926-residue polypeptide: Disease resistance protein RPM1 (926 aa).

The leucine-zipper stretch occupies residues 10 to 45 (IGRILSVLENETLLLSGVHGEIDKMKKELLIMKSFL). In terms of domain architecture, NB-ARC spans 153-467 (DAKWVNNISE…AQRFVEPIRG (315 aa)). 200–207 (GMGGSGKT) contributes to the ATP binding site. 11 LRR repeats span residues 561–580 (LHSL…LPSL), 581–603 (NLLR…LVTM), 605–625 (NLKY…NFHK), 626–649 (LVNL…MWKL), 686–707 (LQVM…CMTQ), 708–731 (LTRI…LNKI), 756–777 (TASI…WFNT), 778–804 (LQNL…TLPR), 825–836 (FQNLKILEIVQM), 837–859 (KHLT…YVRA), and 876–900 (LQEL…SVDR).

Belongs to the disease resistance NB-LRR family. In terms of assembly, interacts directly with RIN4 via its N-terminal region. Interacts (via N-terminus) with RIN2 and RIN3 (via C-terminus). Interacts with TIP49A, a protein known to interact with the TATA binding protein complex (TBP). Binds to MORC1/CRT1. Interacts, via its NB-ARC domain, with RIN13.

It localises to the endomembrane system. It is found in the cell membrane. In terms of biological role, disease resistance (R) protein that specifically recognizes the AvrRpm1 type III effector avirulence protein from Pseudomonas syringae. Resistance proteins guard the plant against pathogens that contain an appropriate avirulence protein via an indirect interaction with this avirulence protein. That triggers a defense system including the hypersensitive response (HR), which restricts the pathogen growth. Acts via its interaction with RIN4, and probably triggers the plant resistance when RIN4 is phosphorylated by AvrRpm1. It is then degraded at the onset of the hypersensitive response. This is Disease resistance protein RPM1 from Arabidopsis thaliana (Mouse-ear cress).